The sequence spans 577 residues: Sulfite reductase [NADPH] hemoprotein beta-component (577 aa).

[4Fe-4S] cluster-binding residues include C441, C447, C486, and C490. Position 490 (C490) interacts with siroheme.

The protein belongs to the nitrite and sulfite reductase 4Fe-4S domain family. As to quaternary structure, alpha(8)-beta(8). The alpha component is a flavoprotein, the beta component is a hemoprotein. The cofactor is siroheme. [4Fe-4S] cluster is required as a cofactor.

The enzyme catalyses hydrogen sulfide + 3 NADP(+) + 3 H2O = sulfite + 3 NADPH + 4 H(+). It participates in sulfur metabolism; hydrogen sulfide biosynthesis; hydrogen sulfide from sulfite (NADPH route): step 1/1. In terms of biological role, component of the sulfite reductase complex that catalyzes the 6-electron reduction of sulfite to sulfide. This is one of several activities required for the biosynthesis of L-cysteine from sulfate. The protein is Sulfite reductase [NADPH] hemoprotein beta-component of Pectobacterium atrosepticum (strain SCRI 1043 / ATCC BAA-672) (Erwinia carotovora subsp. atroseptica).